Here is a 622-residue protein sequence, read N- to C-terminus: WD repeat-containing protein 46 (622 aa).

The interval 1-135 (METAPKPGRG…KTQSKLEKAE (135 aa)) is disordered. Phosphoserine is present on serine 41. Positions 106-118 (EEARKFCRIDKSK) are enriched in basic and acidic residues. WD repeat units lie at residues 192–233 (LRQF…CEIN), 234–271 (VMEAVRDIHFLHSEALLAVAQNRWLYIYDNQGIELHCI), 314–353 (VRAGRLSVMAQNPYNAVIHLGHSNGTVSLWSPAVKEPLAK), 356–395 (CHRGGVRAVAVDSTGTYMATSGLDHQLKIFDLRGTFQPLS), and 398–435 (TLPQGAGHLAFSQRGLLVAGMGDVVNIWAGQGKASPPS). The disordered stretch occupies residues 547–622 (AAFQPKAKQK…AREGGLQVDP (76 aa)). The span at 571–582 (VMDQEHRDKVRQ) shows a compositional bias: basic and acidic residues.

As to quaternary structure, part of the small subunit (SSU) processome, composed of more than 70 proteins and the RNA chaperone small nucleolar RNA (snoRNA) U3. Interacts with DDX21, NCL, NOP2 and EBNA1BP2.

It localises to the nucleus. Its subcellular location is the nucleolus. Its function is as follows. Scaffold component of the nucleolar structure. Required for localization of DDX21 and NCL to the granular compartment of the nucleolus. Part of the small subunit (SSU) processome, first precursor of the small eukaryotic ribosomal subunit. During the assembly of the SSU processome in the nucleolus, many ribosome biogenesis factors, an RNA chaperone and ribosomal proteins associate with the nascent pre-rRNA and work in concert to generate RNA folding, modifications, rearrangements and cleavage as well as targeted degradation of pre-ribosomal RNA by the RNA exosome. This is WD repeat-containing protein 46 (Wdr46) from Mus musculus (Mouse).